The primary structure comprises 1230 residues: ABC transporter B family member 5 (1230 aa).

Helical transmembrane passes span 27–47 (VLLM…SPLM), 78–98 (LVYL…CWMI), 154–174 (FIQL…RGWL), 177–197 (LVML…AIIV), 253–273 (GFVT…TYAL), and 286–306 (GYTG…SIAL). An ABC transmembrane type-1 1 domain is found at 30–318 (MIVGSIGAIA…ASPCLTAFTA (289 aa)). One can recognise an ABC transporter 1 domain in the interval 353-589 (IELRDVCFSY…HEGAYSQLLR (237 aa)). 388-395 (GESGSGKS) serves as a coordination point for ATP. Asn540, Asn615, and Asn616 each carry an N-linked (GlcNAc...) asparagine glycan. The segment at 602 to 621 (ISDGSISSGSSRGNNSTRQD) is disordered. The segment covering 603–617 (SDGSISSGSSRGNNS) has biased composition (low complexity). 2 helical membrane-spanning segments follow: residues 662–682 (ILIL…IFGI) and 707–727 (MIFV…NYLF). One can recognise an ABC transmembrane type-1 2 domain in the interval 663–950 (LILGTLVGAV…ASSFAPDSSK (288 aa)). An N-linked (GlcNAc...) asparagine glycan is attached at Asn759. The next 3 helical transmembrane spans lie at 798–818 (IIAF…IPFI), 889–909 (GVGF…CFYV), and 924–944 (VFQV…ASSF). In terms of domain architecture, ABC transporter 2 spans 985–1223 (IELCHISFTY…EGGVYASLVQ (239 aa)). 1020-1027 (GESGSGKS) lines the ATP pocket. Asn1074, Asn1174, and Asn1227 each carry an N-linked (GlcNAc...) asparagine glycan.

Belongs to the ABC transporter superfamily. ABCB family. Multidrug resistance exporter (TC 3.A.1.201) subfamily.

It is found in the membrane. The sequence is that of ABC transporter B family member 5 (ABCB5) from Arabidopsis thaliana (Mouse-ear cress).